Reading from the N-terminus, the 365-residue chain is Mitogen-activated protein kinase 13 (365 aa).

Residues 25-308 (YVSPTHVGSG…AAQALTHPFF (284 aa)) enclose the Protein kinase domain. 31 to 39 (VGSGAYGSV) contacts ATP. At Ser-47 the chain carries Phosphoserine. Position 54 (Lys-54) interacts with ATP. Asp-150 serves as the catalytic Proton acceptor. Thr-180 bears the Phosphothreonine; by MAP2K3, MAP2K4, MAP2K6 and MAP2K7 mark. A TXY motif is present at residues 180–182 (TGY). Position 182 is a phosphotyrosine; by MAP2K3, MAP2K4, MAP2K6 and MAP2K7 (Tyr-182). A Phosphoserine modification is found at Ser-350.

The protein belongs to the protein kinase superfamily. CMGC Ser/Thr protein kinase family. MAP kinase subfamily. As to quaternary structure, interacts with MAPK8IP2. Mg(2+) serves as cofactor. In terms of processing, dually phosphorylated on Thr-180 and Tyr-182 by MAP2K3/MKK3, MAP2K4/MKK4, MAP2K6/MKK6 and MAP2K7/MKK7, which activates the enzyme. Dephosphorylated by dual specificity phosphatase DUSP1.

The catalysed reaction is L-seryl-[protein] + ATP = O-phospho-L-seryl-[protein] + ADP + H(+). It catalyses the reaction L-threonyl-[protein] + ATP = O-phospho-L-threonyl-[protein] + ADP + H(+). Activated by phosphorylation on threonine and tyrosine by dual specificity kinases, MAP2K3/MKK3, MAP2K6/MKK6, MAP2K4/MKK4 and MAP2K7/MKK7. Activation by ultraviolet radiation, hyperosmotic shock, anisomycin or by TNF-alpha is mediated by MAP2K3/MKK3. Inhibited by dual specificity phosphatase DUSP1. Serine/threonine kinase which acts as an essential component of the MAP kinase signal transduction pathway. MAPK13 is one of the four p38 MAPKs which play an important role in the cascades of cellular responses evoked by extracellular stimuli such as pro-inflammatory cytokines or physical stress leading to direct activation of transcription factors such as ELK1 and ATF2. Accordingly, p38 MAPKs phosphorylate a broad range of proteins and it has been estimated that they may have approximately 200 to 300 substrates each. MAPK13 is one of the less studied p38 MAPK isoforms. Some of the targets are downstream kinases such as MAPKAPK2, which are activated through phosphorylation and further phosphorylate additional targets. Plays a role in the regulation of protein translation by phosphorylating and inactivating EEF2K. Involved in cytoskeletal remodeling through phosphorylation of MAPT and STMN1. Mediates UV irradiation induced up-regulation of the gene expression of CXCL14. Plays an important role in the regulation of epidermal keratinocyte differentiation, apoptosis and skin tumor development. Phosphorylates the transcriptional activator MYB in response to stress which leads to rapid MYB degradation via a proteasome-dependent pathway. MAPK13 also phosphorylates and down-regulates PRKD1 during regulation of insulin secretion in pancreatic beta cells. This chain is Mitogen-activated protein kinase 13 (MAPK13), found in Pan troglodytes (Chimpanzee).